Here is a 498-residue protein sequence, read N- to C-terminus: GTPase Der (498 aa).

2 consecutive EngA-type G domains span residues 3–167 (PVVA…FDDL) and 210–383 (IKLA…KSAT). GTP is bound by residues 9–16 (GRPNVGKS), 57–61 (DTGGI), 119–122 (NKID), 216–223 (GRPNVGKS), 263–267 (DTAGV), and 328–331 (NKWD). One can recognise a KH-like domain in the interval 384–468 (TRVGTSVLTR…PIRINFQNSE (85 aa)).

The protein belongs to the TRAFAC class TrmE-Era-EngA-EngB-Septin-like GTPase superfamily. EngA (Der) GTPase family. In terms of assembly, associates with the 50S ribosomal subunit.

GTPase that plays an essential role in the late steps of ribosome biogenesis. In Vibrio parahaemolyticus serotype O3:K6 (strain RIMD 2210633), this protein is GTPase Der.